The chain runs to 220 residues: Superoxide dismutase [Fe] (220 aa).

Residues H26, H73, D164, and H168 each contribute to the Fe cation site.

Belongs to the iron/manganese superoxide dismutase family. In terms of assembly, homodimer. Fe cation serves as cofactor.

It carries out the reaction 2 superoxide + 2 H(+) = H2O2 + O2. Destroys superoxide anion radicals which are normally produced within the cells and which are toxic to biological systems. The protein is Superoxide dismutase [Fe] (sodB) of Campylobacter coli.